The chain runs to 479 residues: MEPNFYLSLLLLFVTFISLSLFFIFYKQKSPLNLPPGKMGYPIIGESLEFLSTGWKGHPEKFIFDRMRKYSSELFKTSIVGESTVVCCGAASNKFLFSNENKLVTAWWPDSVNKIFPTTSLDSNLKEESIKMRKLLPQFFKPEALQRYVGVMDVIAQRHFVTHWDNKNEITVYPLAKRYTFLLACRLFMSVEDENHVAKFSDPFQLIAAGIISLPIDLPGTPFNKAIKASNFIRKELIKIIKQRRVDLAEGTASPTQDILSHMLLTSDENGKSMNELNIADKILGLLIGGHDTASVACTFLVKYLGELPHIYDKVYQEQMEIAKSKPAGELLNWDDLKKMKYSWNVACEVMRLSPPLQGGFREAITDFMFNGFSIPKGWKLYWSANSTHKNAECFPMPEKFDPTRFEGNGPAPYTFVPFGGGPRMCPGKEYARLEILVFMHNLVKRFKWEKVIPDEKIIVDPFPIPAKDLPIRLYPHKA.

The chain crosses the membrane as a helical span at residues 5 to 25; it reads FYLSLLLLFVTFISLSLFFIF. Position 426 (Cys426) interacts with heme.

It belongs to the cytochrome P450 family. Heme is required as a cofactor. In terms of tissue distribution, expressed in roots, nodules and flowers.

Its subcellular location is the membrane. It catalyses the reaction beta-amyrin + 3 reduced [NADPH--hemoprotein reductase] + 3 O2 = oleanolate + 3 oxidized [NADPH--hemoprotein reductase] + 4 H2O + 4 H(+). In terms of biological role, catalyzes the carboxylation of beta-amyrin at the C-28 position to form oleanolic acid. Involved in an early step in the hemolytic saponin biosynthetic pathway. Catalyzes the carboxylation of alpha-amyrin and lupeol at the C-28 position to form ursolic acid and betulinic acid respectively. This Medicago truncatula (Barrel medic) protein is Beta-amyrin 28-monooxygenase.